The primary structure comprises 222 residues: Probable transaldolase 2 (222 aa).

K90 acts as the Schiff-base intermediate with substrate in catalysis.

It belongs to the transaldolase family. Type 3B subfamily.

The protein localises to the cytoplasm. The catalysed reaction is D-sedoheptulose 7-phosphate + D-glyceraldehyde 3-phosphate = D-erythrose 4-phosphate + beta-D-fructose 6-phosphate. It participates in carbohydrate degradation; pentose phosphate pathway; D-glyceraldehyde 3-phosphate and beta-D-fructose 6-phosphate from D-ribose 5-phosphate and D-xylulose 5-phosphate (non-oxidative stage): step 2/3. In terms of biological role, transaldolase is important for the balance of metabolites in the pentose-phosphate pathway. This chain is Probable transaldolase 2, found in Bacillus anthracis.